Reading from the N-terminus, the 320-residue chain is Protoheme IX farnesyltransferase 1 (320 aa).

A run of 9 helical transmembrane segments spans residues 34-54 (GIII…FASA), 58-78 (LTGL…AFVM), 112-132 (AMIL…LYSL), 135-155 (LTAF…TVWV), 160-180 (VWST…GYCA), 189-209 (AVLL…AIGI), 234-254 (IKMM…PFSL), 255-275 (GTGH…GIWI), and 299-319 (LIYF…MFLI).

It belongs to the UbiA prenyltransferase family. Protoheme IX farnesyltransferase subfamily. As to quaternary structure, interacts with CtaA.

It is found in the cell membrane. It catalyses the reaction heme b + (2E,6E)-farnesyl diphosphate + H2O = Fe(II)-heme o + diphosphate. The protein operates within porphyrin-containing compound metabolism; heme O biosynthesis; heme O from protoheme: step 1/1. In terms of biological role, converts heme B (protoheme IX) to heme O by substitution of the vinyl group on carbon 2 of heme B porphyrin ring with a hydroxyethyl farnesyl side group. This is Protoheme IX farnesyltransferase 1 (ctaB1) from Bacillus subtilis (strain 168).